A 391-amino-acid polypeptide reads, in one-letter code: 2,4,6-trihydroxybenzophenone synthase (391 aa).

Cys165 is an active-site residue.

This sequence belongs to the thiolase-like superfamily. Chalcone/stilbene synthases family. In terms of assembly, homodimer. In terms of tissue distribution, expressed in young fruit pericarp.

The enzyme catalyses benzoyl-CoA + 3 malonyl-CoA + 2 H(+) = 2,4,6-trihydroxybenzophenone + 3 CO2 + 4 CoA. Its function is as follows. Type III polyketide synthase involved in the biosynthesis of benzophenones and xanthones. Produces mainly 2,4,6-trihydroxybenzophenone together with minor amounts of tetraketide lactone, triketide lactone and diketide lactone. The preferred substrate is benzoyl-CoA, but can also use acetyl-CoA, phenylacetyl-CoA, hexanoyl-CoA, cinnamoyl-CoA, p-coumaroyl-CoA and salicoyl-CoA. The protein is 2,4,6-trihydroxybenzophenone synthase (BPS) of Garcinia mangostana (Mangosteen).